Reading from the N-terminus, the 103-residue chain is Large ribosomal subunit protein eL43 (103 aa).

Belongs to the eukaryotic ribosomal protein eL43 family.

This chain is Large ribosomal subunit protein eL43 (RPL37A), found in Tetrahymena thermophila (strain SB210).